The chain runs to 258 residues: Phycoerythrobilin:ferredoxin oxidoreductase (258 aa).

The protein belongs to the HY2 family.

It catalyses the reaction (3Z)-phycoerythrobilin + oxidized 2[4Fe-4S]-[ferredoxin] = 15,16-dihydrobiliverdin + reduced 2[4Fe-4S]-[ferredoxin] + 2 H(+). Functionally, catalyzes the two-electron reduction of the C2 and C3(1) diene system of 15,16-dihydrobiliverdin. The sequence is that of Phycoerythrobilin:ferredoxin oxidoreductase from Prochlorococcus marinus (strain NATL2A).